Reading from the N-terminus, the 251-residue chain is Octanoyltransferase (251 aa).

Residues Ala-56–Ser-237 enclose the BPL/LPL catalytic domain. Substrate-binding positions include Arg-96 to His-103, Ala-168 to Gly-170, and Gly-181 to Ser-183. Cys-199 (acyl-thioester intermediate) is an active-site residue.

The protein belongs to the LipB family.

Its subcellular location is the cytoplasm. It carries out the reaction octanoyl-[ACP] + L-lysyl-[protein] = N(6)-octanoyl-L-lysyl-[protein] + holo-[ACP] + H(+). It functions in the pathway protein modification; protein lipoylation via endogenous pathway; protein N(6)-(lipoyl)lysine from octanoyl-[acyl-carrier-protein]: step 1/2. Functionally, catalyzes the transfer of endogenously produced octanoic acid from octanoyl-acyl-carrier-protein onto the lipoyl domains of lipoate-dependent enzymes. Lipoyl-ACP can also act as a substrate although octanoyl-ACP is likely to be the physiological substrate. This is Octanoyltransferase from Burkholderia ambifaria (strain ATCC BAA-244 / DSM 16087 / CCUG 44356 / LMG 19182 / AMMD) (Burkholderia cepacia (strain AMMD)).